A 654-amino-acid chain; its full sequence is Protein fem-1 homolog A-A (654 aa).

ANK repeat units lie at residues Asp2 to Leu31, Gly40 to Ala70, Glu82 to Arg111, Thr115 to Val145, His149 to Arg178, Lys182 to Arg211, and Tyr214 to Gln243. Phosphoserine is present on Ser108. The disordered stretch occupies residues Glu242 to Pro265. The segment covering Gly253–Ser263 has biased composition (polar residues). TPR repeat units lie at residues Val283–Gly317 and Ser375–Asn408. 2 ANK repeats span residues Asn519–Ser561 and Asp565–Ala594. Residue Ser608 is modified to Phosphoserine.

This sequence belongs to the fem-1 family. In terms of assembly, component of a CRL2 E3 ubiquitin-protein ligase complex, also named ECS (Elongin BC-CUL2/5-SOCS-box protein) complex, composed of CUL2, Elongin BC (ELOB and ELOC), RBX1 and substrate-specific adapter FEM1A. Interacts with PTGER4. Interacts with NFKB1; the interaction is direct. Phosphorylated; highly phosphorylated in myoblasts and myotubes. Phosphorylation at Ser-108 and Ser-608 promote PGE2-EP4-mediated inhibition of inflammation. Dephosphorylated by protein phosphatase 2A (PP2A). Preferentially expressed in cardiac muscle, brain and liver (at protein level). Also expressed in skeletal muscle.

Its subcellular location is the mitochondrion. It is found in the cytoplasm. It participates in protein modification; protein ubiquitination. Substrate-recognition component of a Cul2-RING (CRL2) E3 ubiquitin-protein ligase complex of the DesCEND (destruction via C-end degrons) pathway, which recognizes a C-degron located at the extreme C terminus of target proteins, leading to their ubiquitination and degradation. The C-degron recognized by the DesCEND pathway is usually a motif of less than ten residues and can be present in full-length proteins, truncated proteins or proteolytically cleaved forms. The CRL2(FEM1A) complex specifically recognizes proteins with an arginine at the C-terminus: recognizes and binds proteins ending with -Lys/Arg-Xaa-Arg and -Lys/Arg-Xaa-Xaa-Arg C-degrons, such as SIL1 or OR51B2, leading to their ubiquitination and degradation. Involved in PGE2-EP4-mediated inhibition of inflammation of macrophages via interaction with NFKB1 and PTGER4. Promotes inflammation in brain microglia through MAP2K4/MKK4-mediated signaling. This Mus musculus (Mouse) protein is Protein fem-1 homolog A-A.